A 218-amino-acid polypeptide reads, in one-letter code: Uracil-DNA glycosylase (218 aa).

Aspartate 68 acts as the Proton acceptor in catalysis.

This sequence belongs to the uracil-DNA glycosylase (UDG) superfamily. UNG family. Homodimer. Interacts with protein OPG148. Component of the Uracil-DNA glycosylase(UDG)-OPG148-polymerase complex; OPG148 and UDG form a heterodimeric processivity factor that associates with OPG71 to form the processive polymerase holoenzyme.

It catalyses the reaction Hydrolyzes single-stranded DNA or mismatched double-stranded DNA and polynucleotides, releasing free uracil.. In terms of biological role, plays an essential role in viral replication as a component of the DNA polymerase processivity factor. Excises uracil residues from the DNA which can arise as a result of misincorporation of dUMP residues by DNA polymerase or due to deamination of cytosine. In Homo sapiens (Human), this protein is Uracil-DNA glycosylase (OPG116).